Reading from the N-terminus, the 178-residue chain is MPGSALLCCLLLLAGVKTSKGHSIRGDNNCTHFPVSQTHMLRELRAAFSQVKTFFQKKDQLDNILLTDSLLQDFKGYLGCQALSEMIKFYLVEVMPQAENHGPEIKEHLNSLGEKLKTLWIQLRRCHRFLPCENKSKAVEQVKNDFNKLQDKGVYKAMNEFDIFINCIEAYVTLKMKN.

A signal peptide spans 1–18; that stretch reads MPGSALLCCLLLLAGVKT. Asn29 is a glycosylation site (N-linked (GlcNAc...) asparagine). Intrachain disulfides connect Cys30–Cys126 and Cys80–Cys132. N-linked (GlcNAc...) asparagine glycosylation occurs at Asn134.

The protein belongs to the IL-10 family. Homodimer. Interacts with IL10RA and IL10RB.

It localises to the secreted. In terms of biological role, major immune regulatory cytokine that acts on many cells of the immune system where it has profound anti-inflammatory functions, limiting excessive tissue disruption caused by inflammation. Mechanistically, IL10 binds to its heterotetrameric receptor comprising IL10RA and IL10RB leading to JAK1 and STAT2-mediated phosphorylation of STAT3. In turn, STAT3 translocates to the nucleus where it drives expression of anti-inflammatory mediators. Targets antigen-presenting cells (APCs) such as macrophages and monocytes and inhibits their release of pro-inflammatory cytokines including granulocyte-macrophage colony-stimulating factor /GM-CSF, granulocyte colony-stimulating factor/G-CSF, IL-1 alpha, IL-1 beta, IL-6, IL-8 and TNF-alpha. Also interferes with antigen presentation by reducing the expression of MHC-class II and co-stimulatory molecules, thereby inhibiting their ability to induce T cell activation. In addition, controls the inflammatory response of macrophages by reprogramming essential metabolic pathways including mTOR signaling. The chain is Interleukin-10 (Il10) from Rattus norvegicus (Rat).